A 403-amino-acid chain; its full sequence is Phosphoglycerate kinase (403 aa).

Residues 21–23, R36, 59–62, R119, and R159 contribute to the substrate site; these read DFN and HLGR. ATP-binding positions include K214, G301, E332, and 359–362; that span reads GGDS.

This sequence belongs to the phosphoglycerate kinase family. As to quaternary structure, monomer.

It is found in the cytoplasm. The enzyme catalyses (2R)-3-phosphoglycerate + ATP = (2R)-3-phospho-glyceroyl phosphate + ADP. It participates in carbohydrate degradation; glycolysis; pyruvate from D-glyceraldehyde 3-phosphate: step 2/5. This Lactobacillus delbrueckii subsp. bulgaricus (strain ATCC 11842 / DSM 20081 / BCRC 10696 / JCM 1002 / NBRC 13953 / NCIMB 11778 / NCTC 12712 / WDCM 00102 / Lb 14) protein is Phosphoglycerate kinase.